A 321-amino-acid polypeptide reads, in one-letter code: Glycerol-3-phosphate dehydrogenase [NAD(P)+] (321 aa).

NADPH is bound by residues serine 14, phenylalanine 15, arginine 35, and lysine 109. The sn-glycerol 3-phosphate site is built by lysine 109 and glycine 137. Alanine 141 provides a ligand contact to NADPH. Sn-glycerol 3-phosphate is bound by residues lysine 192, aspartate 252, serine 262, arginine 263, and asparagine 264. Residue lysine 192 is the Proton acceptor of the active site. Arginine 263 provides a ligand contact to NADPH. Residues leucine 287 and glutamate 289 each coordinate NADPH.

This sequence belongs to the NAD-dependent glycerol-3-phosphate dehydrogenase family.

The protein resides in the cytoplasm. The enzyme catalyses sn-glycerol 3-phosphate + NAD(+) = dihydroxyacetone phosphate + NADH + H(+). It carries out the reaction sn-glycerol 3-phosphate + NADP(+) = dihydroxyacetone phosphate + NADPH + H(+). The protein operates within membrane lipid metabolism; glycerophospholipid metabolism. Functionally, catalyzes the reduction of the glycolytic intermediate dihydroxyacetone phosphate (DHAP) to sn-glycerol 3-phosphate (G3P), the key precursor for phospholipid synthesis. The chain is Glycerol-3-phosphate dehydrogenase [NAD(P)+] from Rickettsia felis (strain ATCC VR-1525 / URRWXCal2) (Rickettsia azadi).